A 314-amino-acid chain; its full sequence is Putative S-adenosyl-L-methionine-dependent methyltransferase MAP_4191c (314 aa).

S-adenosyl-L-methionine-binding positions include Asp-138 and 167-168 (DL).

It belongs to the UPF0677 family.

Functionally, exhibits S-adenosyl-L-methionine-dependent methyltransferase activity. This chain is Putative S-adenosyl-L-methionine-dependent methyltransferase MAP_4191c, found in Mycolicibacterium paratuberculosis (strain ATCC BAA-968 / K-10) (Mycobacterium paratuberculosis).